We begin with the raw amino-acid sequence, 243 residues long: DNA repair protein RecO (243 aa).

Belongs to the RecO family.

In terms of biological role, involved in DNA repair and RecF pathway recombination. This Vibrio vulnificus (strain CMCP6) protein is DNA repair protein RecO.